A 225-amino-acid polypeptide reads, in one-letter code: Uridylate kinase (225 aa).

ATP is bound at residue 9–10; the sequence is GS. Glycine 44 contributes to the UMP binding site. 2 residues coordinate ATP: glycine 45 and arginine 49. UMP contacts are provided by residues aspartate 66 and 114-120; that span reads THPGHTT. Residues threonine 140, asparagine 141, tyrosine 146, and aspartate 149 each contribute to the ATP site.

It belongs to the UMP kinase family. As to quaternary structure, homohexamer.

It is found in the cytoplasm. The enzyme catalyses UMP + ATP = UDP + ADP. It functions in the pathway pyrimidine metabolism; CTP biosynthesis via de novo pathway; UDP from UMP (UMPK route): step 1/1. With respect to regulation, inhibited by UTP. Functionally, catalyzes the reversible phosphorylation of UMP to UDP. The chain is Uridylate kinase from Pyrococcus abyssi (strain GE5 / Orsay).